We begin with the raw amino-acid sequence, 243 residues long: Phosphoribosylaminoimidazole-succinocarboxamide synthase (243 aa).

It belongs to the SAICAR synthetase family.

It catalyses the reaction 5-amino-1-(5-phospho-D-ribosyl)imidazole-4-carboxylate + L-aspartate + ATP = (2S)-2-[5-amino-1-(5-phospho-beta-D-ribosyl)imidazole-4-carboxamido]succinate + ADP + phosphate + 2 H(+). It participates in purine metabolism; IMP biosynthesis via de novo pathway; 5-amino-1-(5-phospho-D-ribosyl)imidazole-4-carboxamide from 5-amino-1-(5-phospho-D-ribosyl)imidazole-4-carboxylate: step 1/2. The sequence is that of Phosphoribosylaminoimidazole-succinocarboxamide synthase from Thermosynechococcus vestitus (strain NIES-2133 / IAM M-273 / BP-1).